We begin with the raw amino-acid sequence, 203 residues long: Large ribosomal subunit protein uL13 (203 aa).

At A2 the chain carries N-acetylalanine. R59 carries the post-translational modification Citrulline. S77 carries the phosphoserine; by ZIPK/DAPK3 modification. A Citrulline modification is found at R140. At K191 the chain carries N6-acetyllysine.

It belongs to the universal ribosomal protein uL13 family. In terms of assembly, component of the 60S ribosome. Component of the GAIT complex. Interacts with EIF4G1. In terms of processing, phosphorylation at Ser-77 upon interferon-gamma treatment in monocytes involves a DAPK1-DAPK3 kinase cascade and is causing release from the ribosome, association with the GAIT complex and subsequent involvement in transcript-selective translation inhibition. Citrullinated by PADI4.

It is found in the cytoplasm. Functionally, associated with ribosomes but is not required for canonical ribosome function and has extra-ribosomal functions. Component of the GAIT (gamma interferon-activated inhibitor of translation) complex which mediates interferon-gamma-induced transcript-selective translation inhibition in inflammation processes. Upon interferon-gamma activation and subsequent phosphorylation dissociates from the ribosome and assembles into the GAIT complex which binds to stem loop-containing GAIT elements in the 3'-UTR of diverse inflammatory mRNAs (such as ceruplasmin) and suppresses their translation. In the GAIT complex interacts with m7G cap-bound eIF4G at or near the eIF3-binding site and blocks the recruitment of the 43S ribosomal complex. Involved in methylation of rRNA. In Homo sapiens (Human), this protein is Large ribosomal subunit protein uL13 (RPL13A).